An 89-amino-acid polypeptide reads, in one-letter code: Large ribosomal subunit protein bL27 (89 aa).

Residues M1–L21 form a disordered region.

It belongs to the bacterial ribosomal protein bL27 family.

This Brucella anthropi (strain ATCC 49188 / DSM 6882 / CCUG 24695 / JCM 21032 / LMG 3331 / NBRC 15819 / NCTC 12168 / Alc 37) (Ochrobactrum anthropi) protein is Large ribosomal subunit protein bL27.